The sequence spans 452 residues: Bifunctional protein GlmU (452 aa).

Residues 1–225 form a pyrophosphorylase region; sequence MEVVILAAGQ…VSETLGVNSK (225 aa). Residues 6-9, lysine 20, glutamine 71, 76-77, 98-100, glycine 135, glutamate 150, asparagine 165, and asparagine 223 each bind UDP-N-acetyl-alpha-D-glucosamine; these read LAAG, GT, and YGD. Mg(2+) is bound at residue aspartate 100. Asparagine 223 provides a ligand contact to Mg(2+). The tract at residues 226–246 is linker; the sequence is PQLAELERIHQRNIAQRLMED. Positions 247–452 are N-acetyltransferase; the sequence is GVTLIDPARI…AGWKRPVKQR (206 aa). The UDP-N-acetyl-alpha-D-glucosamine site is built by arginine 329 and lysine 347. Histidine 359 functions as the Proton acceptor in the catalytic mechanism. Tyrosine 362 and asparagine 373 together coordinate UDP-N-acetyl-alpha-D-glucosamine. Residues alanine 376, 382 to 383, serine 401, alanine 419, and arginine 436 contribute to the acetyl-CoA site; that span reads NY.

The protein in the N-terminal section; belongs to the N-acetylglucosamine-1-phosphate uridyltransferase family. In the C-terminal section; belongs to the transferase hexapeptide repeat family. Homotrimer. It depends on Mg(2+) as a cofactor.

It localises to the cytoplasm. It carries out the reaction alpha-D-glucosamine 1-phosphate + acetyl-CoA = N-acetyl-alpha-D-glucosamine 1-phosphate + CoA + H(+). The catalysed reaction is N-acetyl-alpha-D-glucosamine 1-phosphate + UTP + H(+) = UDP-N-acetyl-alpha-D-glucosamine + diphosphate. Its pathway is nucleotide-sugar biosynthesis; UDP-N-acetyl-alpha-D-glucosamine biosynthesis; N-acetyl-alpha-D-glucosamine 1-phosphate from alpha-D-glucosamine 6-phosphate (route II): step 2/2. It participates in nucleotide-sugar biosynthesis; UDP-N-acetyl-alpha-D-glucosamine biosynthesis; UDP-N-acetyl-alpha-D-glucosamine from N-acetyl-alpha-D-glucosamine 1-phosphate: step 1/1. It functions in the pathway bacterial outer membrane biogenesis; LPS lipid A biosynthesis. Catalyzes the last two sequential reactions in the de novo biosynthetic pathway for UDP-N-acetylglucosamine (UDP-GlcNAc). The C-terminal domain catalyzes the transfer of acetyl group from acetyl coenzyme A to glucosamine-1-phosphate (GlcN-1-P) to produce N-acetylglucosamine-1-phosphate (GlcNAc-1-P), which is converted into UDP-GlcNAc by the transfer of uridine 5-monophosphate (from uridine 5-triphosphate), a reaction catalyzed by the N-terminal domain. This is Bifunctional protein GlmU from Azoarcus sp. (strain BH72).